A 204-amino-acid polypeptide reads, in one-letter code: 5'-deoxynucleotidase HDDC2 (204 aa).

Alanine 2 bears the N-acetylalanine mark. Phosphoserine is present on residues serine 3 and serine 5. The HD domain maps to 46-148 (VSDHMYRMAV…VKQLDQCEMI (103 aa)). Residues histidine 49, histidine 77, aspartate 78, glutamate 81, aspartate 86, isoleucine 87, and aspartate 143 each contribute to the a divalent metal cation site. A Phosphoserine modification is found at serine 204.

Belongs to the HDDC2 family. As to quaternary structure, homodimer. Requires Mn(2+) as cofactor. Co(2+) serves as cofactor. Mg(2+) is required as a cofactor.

It catalyses the reaction a 2'-deoxyribonucleoside 5'-phosphate + H2O = a 2'-deoxyribonucleoside + phosphate. Functionally, catalyzes the dephosphorylation of the nucleoside 5'-monophosphates deoxyadenosine monophosphate (dAMP), deoxycytidine monophosphate (dCMP), deoxyguanosine monophosphate (dGMP) and deoxythymidine monophosphate (dTMP). The polypeptide is 5'-deoxynucleotidase HDDC2 (HDDC2) (Homo sapiens (Human)).